Reading from the N-terminus, the 245-residue chain is Ribosomal protein L11 methyltransferase (245 aa).

4 residues coordinate S-adenosyl-L-methionine: T101, G122, D144, and N184.

This sequence belongs to the methyltransferase superfamily. PrmA family.

The protein resides in the cytoplasm. It catalyses the reaction L-lysyl-[protein] + 3 S-adenosyl-L-methionine = N(6),N(6),N(6)-trimethyl-L-lysyl-[protein] + 3 S-adenosyl-L-homocysteine + 3 H(+). Its function is as follows. Methylates ribosomal protein L11. This Aquifex aeolicus (strain VF5) protein is Ribosomal protein L11 methyltransferase.